The following is a 59-amino-acid chain: Large ribosomal subunit protein uL30 (59 aa).

This sequence belongs to the universal ribosomal protein uL30 family. Part of the 50S ribosomal subunit.

This is Large ribosomal subunit protein uL30 from Aliivibrio salmonicida (strain LFI1238) (Vibrio salmonicida (strain LFI1238)).